Reading from the N-terminus, the 388-residue chain is 1-deoxy-D-xylulose 5-phosphate reductoisomerase (388 aa).

The NADPH site is built by threonine 13, glycine 14, serine 15, isoleucine 16, arginine 40, asparagine 41, and asparagine 124. Lysine 125 provides a ligand contact to 1-deoxy-D-xylulose 5-phosphate. Glutamate 126 serves as a coordination point for NADPH. Mn(2+) is bound at residue aspartate 150. Residues serine 151, glutamate 152, serine 176, and histidine 199 each coordinate 1-deoxy-D-xylulose 5-phosphate. Residue glutamate 152 coordinates Mn(2+). Glycine 205 is a binding site for NADPH. Serine 212, asparagine 217, lysine 218, and glutamate 221 together coordinate 1-deoxy-D-xylulose 5-phosphate. Glutamate 221 serves as a coordination point for Mn(2+).

This sequence belongs to the DXR family. Homodimer. Requires Mg(2+) as cofactor. It depends on Mn(2+) as a cofactor. Co(2+) serves as cofactor.

The catalysed reaction is 2-C-methyl-D-erythritol 4-phosphate + NADP(+) = 1-deoxy-D-xylulose 5-phosphate + NADPH + H(+). The protein operates within isoprenoid biosynthesis; isopentenyl diphosphate biosynthesis via DXP pathway; isopentenyl diphosphate from 1-deoxy-D-xylulose 5-phosphate: step 1/6. Its activity is regulated as follows. Competitively inhibited by the antibiotic fosmidomycin. Catalyzes the NADPH-dependent rearrangement and reduction of 1-deoxy-D-xylulose-5-phosphate (DXP) to 2-C-methyl-D-erythritol 4-phosphate (MEP). Cannot use NADH instead of NADPH as the reducing agent. This is 1-deoxy-D-xylulose 5-phosphate reductoisomerase from Zymomonas mobilis subsp. mobilis (strain ATCC 31821 / ZM4 / CP4).